Reading from the N-terminus, the 326-residue chain is o-succinylbenzoate synthase (326 aa).

The Proton donor role is filled by lysine 110. The Mg(2+) site is built by aspartate 138, glutamate 165, and aspartate 188. The active-site Proton acceptor is lysine 212.

Belongs to the mandelate racemase/muconate lactonizing enzyme family. MenC type 1 subfamily. Requires a divalent metal cation as cofactor.

The catalysed reaction is (1R,6R)-6-hydroxy-2-succinyl-cyclohexa-2,4-diene-1-carboxylate = 2-succinylbenzoate + H2O. It participates in quinol/quinone metabolism; 1,4-dihydroxy-2-naphthoate biosynthesis; 1,4-dihydroxy-2-naphthoate from chorismate: step 4/7. The protein operates within quinol/quinone metabolism; menaquinone biosynthesis. Functionally, converts 2-succinyl-6-hydroxy-2,4-cyclohexadiene-1-carboxylate (SHCHC) to 2-succinylbenzoate (OSB). This chain is o-succinylbenzoate synthase, found in Mycobacterium bovis (strain ATCC BAA-935 / AF2122/97).